A 502-amino-acid chain; its full sequence is Protein Dok-7 (502 aa).

Positions serine 4–glycine 109 constitute a PH domain. In terms of domain architecture, IRS-type PTB spans arginine 105–phenylalanine 210. 4 disordered regions span residues phenylalanine 210–histidine 232, serine 249–serine 279, threonine 291–serine 358, and glutamate 418–glycine 482. Composition is skewed to low complexity over residues isoleucine 264–serine 279 and alanine 301–serine 316. Polar residues predominate over residues glycine 336 to alanine 346. The segment covering threonine 347 to serine 358 has biased composition (low complexity). Over residues proline 459–serine 473 the composition is skewed to basic and acidic residues.

Its subcellular location is the cell membrane. The protein localises to the synapse. Functionally, probable muscle-intrinsic activator of MUSK that plays an essential role in neuromuscular synaptogenesis. Acts in aneural activation of MUSK and subsequent acetylcholine receptor (AchR) clustering in myotubes. In Takifugu rubripes (Japanese pufferfish), this protein is Protein Dok-7 (dok7).